The primary structure comprises 130 residues: UPF0146 protein AF_0739.1 (130 aa).

This sequence belongs to the UPF0146 family.

The polypeptide is UPF0146 protein AF_0739.1 (Archaeoglobus fulgidus (strain ATCC 49558 / DSM 4304 / JCM 9628 / NBRC 100126 / VC-16)).